A 64-amino-acid polypeptide reads, in one-letter code: Small ribosomal subunit protein bS21 (64 aa).

This sequence belongs to the bacterial ribosomal protein bS21 family.

This chain is Small ribosomal subunit protein bS21, found in Karelsulcia muelleri (strain GWSS) (Sulcia muelleri).